A 255-amino-acid chain; its full sequence is Hydroxyethylthiazole kinase (255 aa).

Position 38 (methionine 38) interacts with substrate. The ATP site is built by arginine 114 and threonine 160. Glycine 187 is a substrate binding site.

Belongs to the Thz kinase family. Requires Mg(2+) as cofactor.

It catalyses the reaction 5-(2-hydroxyethyl)-4-methylthiazole + ATP = 4-methyl-5-(2-phosphooxyethyl)-thiazole + ADP + H(+). Its pathway is cofactor biosynthesis; thiamine diphosphate biosynthesis; 4-methyl-5-(2-phosphoethyl)-thiazole from 5-(2-hydroxyethyl)-4-methylthiazole: step 1/1. Catalyzes the phosphorylation of the hydroxyl group of 4-methyl-5-beta-hydroxyethylthiazole (THZ). The protein is Hydroxyethylthiazole kinase of Lysinibacillus sphaericus (strain C3-41).